The chain runs to 204 residues: Protein phosphatase 1 regulatory subunit 1B (204 aa).

Met1 is modified (N-acetylmethionine). Positions 1–204 (MDPKDRKKIQ…QRPSPSEPGT (204 aa)) are disordered. Thr34 carries the phosphothreonine; by PKA modification. Over residues 41–63 (LSEHSSPEEEASPHQRASGEGHH) the composition is skewed to basic and acidic residues. Ser45 and Ser46 each carry phosphoserine. Thr75 carries the phosphothreonine; by CDK5 modification. The segment covering 89-100 (HLQSISNLNENQ) has biased composition (polar residues). Ser102 bears the Phosphoserine mark. Residues 109–118 (GELRELGYPR) show a composition bias toward basic and acidic residues. 2 stretches are compositionally biased toward acidic residues: residues 119 to 138 (EEDE…EDSQ) and 170 to 183 (DESE…DQVE). Ser137 is subject to Phosphoserine. Ser198 bears the Phosphoserine mark.

This sequence belongs to the protein phosphatase inhibitor 1 family. Dopamine- and cyclic AMP-regulated neuronal phosphoprotein. Post-translationally, phosphorylation of Thr-34 is required for activity.

The protein resides in the cytoplasm. Its function is as follows. Inhibitor of protein-phosphatase 1. The polypeptide is Protein phosphatase 1 regulatory subunit 1B (PPP1R1B) (Homo sapiens (Human)).